Reading from the N-terminus, the 487-residue chain is N-succinylglutamate 5-semialdehyde dehydrogenase (487 aa).

An NAD(+)-binding site is contributed by 221-226 (GSSDTG). Residues glutamate 244 and cysteine 278 contribute to the active site.

This sequence belongs to the aldehyde dehydrogenase family. AstD subfamily.

It carries out the reaction N-succinyl-L-glutamate 5-semialdehyde + NAD(+) + H2O = N-succinyl-L-glutamate + NADH + 2 H(+). The protein operates within amino-acid degradation; L-arginine degradation via AST pathway; L-glutamate and succinate from L-arginine: step 4/5. Functionally, catalyzes the NAD-dependent reduction of succinylglutamate semialdehyde into succinylglutamate. This Burkholderia thailandensis (strain ATCC 700388 / DSM 13276 / CCUG 48851 / CIP 106301 / E264) protein is N-succinylglutamate 5-semialdehyde dehydrogenase.